A 372-amino-acid chain; its full sequence is MTKRPEDTRVVVGMSGGVDSSVAALMLKEQGYDVIGIFMKNWDDTDENGVCTATEDYEDVIRVCNQIGIPYYAVNFEKQYWDKVFQYFLDEYKAGRTPNPDVMCNKEIKFKAFLEHALSLGADYLATGHYARVDRTGDEVKMLRGLDANKDQTYFLNQLTQEQLDKVMFPIGDLEKKRVRELAKEAELATATKKDSTGICFIGERNFKTFLSQYLPAQPGVMQTMDGEVKGEHDGLMYYTIGQRQGLGIGGSGDPWFVVGKDLEQNILFVEQGFHNPLLYSESISAVNISWTRPHIVGENGELTCTAKFRYRQEDHHVKVKMTGEQEAMVIFDEPVRAVTPGQAVVFYDGDECLGGGTIDDVFKDGQKLSYV.

ATP contacts are provided by residues 13–20 (GMSGGVDS) and M39. Residues 99-101 (NPD) are interaction with target base in tRNA. C104 acts as the Nucleophile in catalysis. A disulfide bridge links C104 with C200. Residue G128 participates in ATP binding. Positions 150–152 (KDQ) are interaction with tRNA. C200 serves as the catalytic Cysteine persulfide intermediate. Positions 310 to 311 (RY) are interaction with tRNA.

Belongs to the MnmA/TRMU family.

Its subcellular location is the cytoplasm. It carries out the reaction S-sulfanyl-L-cysteinyl-[protein] + uridine(34) in tRNA + AH2 + ATP = 2-thiouridine(34) in tRNA + L-cysteinyl-[protein] + A + AMP + diphosphate + H(+). Catalyzes the 2-thiolation of uridine at the wobble position (U34) of tRNA, leading to the formation of s(2)U34. This chain is tRNA-specific 2-thiouridylase MnmA, found in Bacillus pumilus (strain SAFR-032).